The chain runs to 635 residues: 1-deoxy-D-xylulose-5-phosphate synthase (635 aa).

Thiamine diphosphate contacts are provided by residues histidine 79 and glycine 120 to serine 122. Aspartate 151 contacts Mg(2+). Thiamine diphosphate contacts are provided by residues glycine 152–alanine 153, asparagine 182, tyrosine 290, and glutamate 372. Residue asparagine 182 participates in Mg(2+) binding.

Belongs to the transketolase family. DXPS subfamily. As to quaternary structure, homodimer. It depends on Mg(2+) as a cofactor. Thiamine diphosphate is required as a cofactor.

It catalyses the reaction D-glyceraldehyde 3-phosphate + pyruvate + H(+) = 1-deoxy-D-xylulose 5-phosphate + CO2. The protein operates within metabolic intermediate biosynthesis; 1-deoxy-D-xylulose 5-phosphate biosynthesis; 1-deoxy-D-xylulose 5-phosphate from D-glyceraldehyde 3-phosphate and pyruvate: step 1/1. Catalyzes the acyloin condensation reaction between C atoms 2 and 3 of pyruvate and glyceraldehyde 3-phosphate to yield 1-deoxy-D-xylulose-5-phosphate (DXP). The polypeptide is 1-deoxy-D-xylulose-5-phosphate synthase (Stenotrophomonas maltophilia (strain K279a)).